A 223-amino-acid chain; its full sequence is Small ribosomal subunit protein uS3 (223 aa).

The KH type-2 domain occupies 39 to 108 (IRNFVKKNSY…NILINIVEVK (70 aa)).

The protein belongs to the universal ribosomal protein uS3 family. As to quaternary structure, part of the 30S ribosomal subunit. Forms a tight complex with proteins S10 and S14.

In terms of biological role, binds the lower part of the 30S subunit head. Binds mRNA in the 70S ribosome, positioning it for translation. In Clostridium botulinum (strain Okra / Type B1), this protein is Small ribosomal subunit protein uS3.